The chain runs to 1151 residues: Cation channel sperm-associated protein subunit gamma 1 (1151 aa).

A signal peptide spans 1 to 38 (MVSRPAMSPVSPVWPRKPNLWAFWVLRLVLLLSLKSWA). Over 39–1063 (EDTLQHCTWL…GLPLSSKRSS (1025 aa)) the chain is Extracellular. The N-linked (GlcNAc...) asparagine glycan is linked to asparagine 356. The chain crosses the membrane as a helical span at residues 1064 to 1084 (FIVMVSTSFFIALVVFYILFC). The Cytoplasmic portion of the chain corresponds to 1085 to 1151 (LVWPHIVKAW…NVQAKRAKVA (67 aa)). A compositionally biased stretch (low complexity) spans 1113–1123 (SSSSGGFTLHS). Residues 1113 to 1151 (SSSSGGFTLHSHSSEGSFEGPSRPGTKEDNVQAKRAKVA) form a disordered region.

Belongs to the CATSPERG family.

It is found in the membrane. The sequence is that of Cation channel sperm-associated protein subunit gamma 1 (Catsperg1) from Mus musculus (Mouse).